A 1149-amino-acid polypeptide reads, in one-letter code: cGMP-specific 3',5'-cyclic phosphodiesterase (1149 aa).

Low complexity-rich tracts occupy residues 1 to 19 (MHGT…DVSS) and 31 to 47 (ATSS…ASSS). A disordered region spans residues 1–175 (MHGTVSRSSS…STTASQQDVD (175 aa)). The segment covering 48–59 (KPLTNGANKTAI) has biased composition (polar residues). Over residues 60–85 (STAAGVTPGAAPGPGCAAIPASGSSG) the composition is skewed to low complexity. Residues 96 to 108 (QSNNNRPAGSNRS) show a composition bias toward polar residues. The segment covering 132-158 (SSSSPSQSPSQSQSQSQASIQTQTSQQ) has biased composition (low complexity). GAF domains lie at 278-430 (DIDV…GIGI) and 462-643 (NLEC…GLGI). The PDEase domain maps to 673–996 (SQDQTEKLTQ…RNWQDLAEKV (324 aa)). Residue H749 is the Proton donor of the active site. A divalent metal cation-binding residues include H753, H789, D790, and D900. Disordered regions lie at residues 1037–1066 (QQSQ…TGAL) and 1096–1149 (SHVS…CALL). Basic and acidic residues-rich tracts occupy residues 1042–1053 (GSEDSHTPEHQR) and 1096–1106 (SHVSEDMDDKS). Residues 1115 to 1135 (ASGSMGRMSASSSTSSAGGQM) are compositionally biased toward low complexity. Positions 1139–1149 (SKKRSKLCALL) are enriched in basic residues. Cysteine methyl ester is present on C1146. C1146 is lipidated: S-farnesyl cysteine. Residues 1147-1149 (ALL) constitute a propeptide, removed in mature form.

Belongs to the cyclic nucleotide phosphodiesterase family. As to quaternary structure, interacts with PrBP. A divalent metal cation serves as cofactor.

It is found in the cell membrane. The enzyme catalyses 3',5'-cyclic GMP + H2O = GMP + H(+). Has a role regulating cGMP transport in Malpighian tubule principal cells. The sequence is that of cGMP-specific 3',5'-cyclic phosphodiesterase from Drosophila yakuba (Fruit fly).